The sequence spans 263 residues: MEDETELCFRSNKVTRLEMFVCTYGGKISSLACSHMELIKILQIAEPVKALNCNFGHQCLPGYESLIKTPKKTKNMLRRPRKTEGDGTCFNSAIEASILFKDKMYKLKCFPSTGEIQVPGVIFPDFEDGKNIIQQWVDFLQHQPIEKKIQIIEFKTIMINFKFQINPVSPRVIIHLKKFAALLEHIPTPYPIREIKPPLEDSKVSAKFMVSPGKKVRINVFLKGKINILGCNTKESAETIYTFLKDLISVHWQEILCVLPMPD.

The protein belongs to the asfivirus B263R family.

Putative TATA-binding protein. In Ornithodoros (relapsing fever ticks), this protein is Putative TATA-binding protein pB263R.